A 151-amino-acid polypeptide reads, in one-letter code: Small ribosomal subunit protein uS15 (151 aa).

It belongs to the universal ribosomal protein uS15 family.

The protein is Small ribosomal subunit protein uS15 (RpS13) of Plutella xylostella (Diamondback moth).